Consider the following 749-residue polypeptide: Protein O-mannosyl-transferase 2 (749 aa).

Residues 1 to 30 (MAASVVKTPKCPRRGSAKEQQSKASPKSNN) are disordered. The chain crosses the membrane as a helical span at residues 34–54 (NWHWWILLASVFLITFATRFY). Asparagine 78, asparagine 104, and asparagine 117 each carry an N-linked (GlcNAc...) asparagine glycan. 5 consecutive transmembrane segments (helical) span residues 126–146 (YFCT…VYDL), 173–193 (ILLD…MVKI), 204–224 (SVRW…TISV), 226–246 (FVGL…LWLI), and 266–286 (IALI…HLSV). 2 N-linked (GlcNAc...) asparagine glycosylation sites follow: asparagine 288 and asparagine 312. MIR domains lie at 316 to 372 (PRDV…IKPH), 382 to 438 (LQLL…VLIV), and 443 to 499 (NETV…VEDN). An N-linked (GlcNAc...) asparagine glycan is attached at asparagine 443. 4 consecutive transmembrane segments (helical) span residues 572–592 (IWWS…GNAI), 645–665 (LGAA…FWAM), 669–689 (LYFH…GVMF), and 703–723 (VLLG…SPLA). An N-linked (GlcNAc...) asparagine glycan is attached at asparagine 735.

The protein belongs to the glycosyltransferase 39 family. Interacts with Rt/POMT1.

It localises to the endoplasmic reticulum membrane. The enzyme catalyses a di-trans,poly-cis-dolichyl beta-D-mannosyl phosphate + L-seryl-[protein] = 3-O-(alpha-D-mannosyl)-L-seryl-[protein] + a di-trans,poly-cis-dolichyl phosphate + H(+). The catalysed reaction is a di-trans,poly-cis-dolichyl beta-D-mannosyl phosphate + L-threonyl-[protein] = 3-O-(alpha-D-mannosyl)-L-threonyl-[protein] + a di-trans,poly-cis-dolichyl phosphate + H(+). Its pathway is protein modification; protein glycosylation. Its function is as follows. Rt/POMT1 and tw/POMT2 function as a protein O-mannosyltransferase in association with each other to generate and maintain normal muscle development. The protein is Protein O-mannosyl-transferase 2 of Drosophila pseudoobscura pseudoobscura (Fruit fly).